The primary structure comprises 1135 residues: Ubiquitin carboxyl-terminal hydrolase 7 (1135 aa).

Residues 31-172 form the MATH domain; it reads EGHLSLDIDC…NDTIKLRCRF (142 aa). The 311-residue stretch at 193 to 503 folds into the USP domain; that stretch reads IGLRNQGATC…SAYMLVYVRD (311 aa). Residue Cys-202 is the Nucleophile of the active site. The Proton acceptor role is filled by His-442.

It belongs to the peptidase C19 family.

The protein resides in the nucleus. It catalyses the reaction Thiol-dependent hydrolysis of ester, thioester, amide, peptide and isopeptide bonds formed by the C-terminal Gly of ubiquitin (a 76-residue protein attached to proteins as an intracellular targeting signal).. In terms of biological role, hydrolase that deubiquitinates target proteins. May play a role in regulating the levels of endogenous siRNA biogenesis. The polypeptide is Ubiquitin carboxyl-terminal hydrolase 7 (Caenorhabditis elegans).